Reading from the N-terminus, the 27-residue chain is rRNA/tRNA 2'-O-methyltransferase fibrillarin (27 aa).

Residues 1 to 12 (XFEGRGGFGGRG) show a composition bias toward gly residues. Positions 1–27 (XFEGRGGFGGRGGGDRGGRGXGGFGGG) are disordered. Residues Arg5, Arg11, Arg16, and Arg19 each carry the asymmetric dimethylarginine modification.

It belongs to the methyltransferase superfamily. Fibrillarin family. In terms of assembly, component of box C/D small nucleolar ribonucleoprotein (snoRNP) particles. It is associated with the U3, U8 and U13 small nuclear RNAs.

It is found in the nucleus. The protein localises to the nucleolus. It carries out the reaction L-glutaminyl-[histone H2A] + S-adenosyl-L-methionine = N(5)-methyl-L-glutaminyl-[histone H2A] + S-adenosyl-L-homocysteine + H(+). Its function is as follows. S-adenosyl-L-methionine-dependent methyltransferase that has the ability to methylate both RNAs and proteins. Involved in pre-rRNA processing. Utilizes the methyl donor S-adenosyl-L-methionine to catalyze the site-specific 2'-hydroxyl methylation of ribose moieties in pre-ribosomal RNA. Site specificity is provided by a guide RNA that base pairs with the substrate. Methylation occurs at a characteristic distance from the sequence involved in base pairing with the guide RNA. Also acts as a protein methyltransferase by mediating methylation of 'Gln-105' of histone H2A (H2AQ105me), a modification that impairs binding of the FACT complex and is specifically present at 35S ribosomal DNA locus. The chain is rRNA/tRNA 2'-O-methyltransferase fibrillarin from Physarum polycephalum (Slime mold).